The chain runs to 128 residues: Fluoride-specific ion channel FluC (128 aa).

4 helical membrane-spanning segments follow: residues 5–25, 35–55, 67–87, and 96–116; these read IVAI…LSLA, LGTL…AVVF, LFVI…SVEV, and FGWA…LTAL. Na(+) contacts are provided by glycine 75 and threonine 78.

The protein belongs to the fluoride channel Fluc/FEX (TC 1.A.43) family.

It is found in the cell inner membrane. It carries out the reaction fluoride(in) = fluoride(out). Na(+) is not transported, but it plays an essential structural role and its presence is essential for fluoride channel function. Functionally, fluoride-specific ion channel. Important for reducing fluoride concentration in the cell, thus reducing its toxicity. This is Fluoride-specific ion channel FluC from Burkholderia cenocepacia (strain HI2424).